A 39-amino-acid chain; its full sequence is uncharacterized protein (39 aa).

It belongs to the asfivirus C84L family.

This is an uncharacterized protein from African swine fever virus (isolate Warthog/Namibia/Wart80/1980) (ASFV).